Reading from the N-terminus, the 348-residue chain is Anthranilate phosphoribosyltransferase (348 aa).

Residues G89, 92 to 93, T97, 99 to 102, 117 to 125, and S129 each bind 5-phospho-alpha-D-ribose 1-diphosphate; these read GD, NIST, and KHGNRSASS. G89 contacts anthranilate. Position 101 (S101) interacts with Mg(2+). N120 provides a ligand contact to anthranilate. Anthranilate is bound at residue R175. 2 residues coordinate Mg(2+): D234 and E235.

This sequence belongs to the anthranilate phosphoribosyltransferase family. In terms of assembly, homodimer. Requires Mg(2+) as cofactor.

It carries out the reaction N-(5-phospho-beta-D-ribosyl)anthranilate + diphosphate = 5-phospho-alpha-D-ribose 1-diphosphate + anthranilate. The protein operates within amino-acid biosynthesis; L-tryptophan biosynthesis; L-tryptophan from chorismate: step 2/5. Functionally, catalyzes the transfer of the phosphoribosyl group of 5-phosphorylribose-1-pyrophosphate (PRPP) to anthranilate to yield N-(5'-phosphoribosyl)-anthranilate (PRA). This chain is Anthranilate phosphoribosyltransferase, found in Synechocystis sp. (strain ATCC 27184 / PCC 6803 / Kazusa).